We begin with the raw amino-acid sequence, 256 residues long: Mannose-specific lectin 1 (256 aa).

Residues 1-23 (MAKLLLFLLPAILGLLVPRSAVA) form the signal peptide. 2 consecutive Bulb-type lectin domains span residues 26-131 (TNYL…PWVR) and 145-252 (NNLL…SKRS). Residues 51–55 (QDDCN), Y59, W63, Q64, 170–174 (QGDCN), Y178, and 182–185 (YGWQ) each bind beta-D-mannose. A Carbohydrate-binding motif 1 motif is present at residues 51–59 (QDDCNLVLY). Intrachain disulfides connect C54–C74 and C173–C195. The short motif at 170 to 178 (QGDCNLVLY) is the Carbohydrate-binding motif 2 element.

Forms heterodimers.

Its subcellular location is the secreted. Mannose-specific lectin. Shows agglutinating activity towards erythrocytes from rabbit. This chain is Mannose-specific lectin 1, found in Remusatia vivipara (Hitchhiker elephant ear).